The sequence spans 270 residues: Regulator of G-protein signaling rgs-10 (270 aa).

The RGS domain occupies 135 to 252 (SPETLAASEY…LEDPLYLDLV (118 aa)).

Shown to have a role in viability and embryogenesis. The polypeptide is Regulator of G-protein signaling rgs-10 (rgs-10) (Caenorhabditis elegans).